The sequence spans 264 residues: Thymidylate synthase (264 aa).

Arg-21 contacts dUMP. His-51 contacts (6R)-5,10-methylene-5,6,7,8-tetrahydrofolate. 126–127 (RR) contributes to the dUMP binding site. Residue Cys-146 is the Nucleophile of the active site. DUMP is bound by residues 166–169 (RSAD), Asn-177, and 207–209 (HIY). Residue Asp-169 participates in (6R)-5,10-methylene-5,6,7,8-tetrahydrofolate binding. Ala-263 serves as a coordination point for (6R)-5,10-methylene-5,6,7,8-tetrahydrofolate.

This sequence belongs to the thymidylate synthase family. Bacterial-type ThyA subfamily. As to quaternary structure, homodimer.

It is found in the cytoplasm. It carries out the reaction dUMP + (6R)-5,10-methylene-5,6,7,8-tetrahydrofolate = 7,8-dihydrofolate + dTMP. The protein operates within pyrimidine metabolism; dTTP biosynthesis. Its function is as follows. Catalyzes the reductive methylation of 2'-deoxyuridine-5'-monophosphate (dUMP) to 2'-deoxythymidine-5'-monophosphate (dTMP) while utilizing 5,10-methylenetetrahydrofolate (mTHF) as the methyl donor and reductant in the reaction, yielding dihydrofolate (DHF) as a by-product. This enzymatic reaction provides an intracellular de novo source of dTMP, an essential precursor for DNA biosynthesis. The polypeptide is Thymidylate synthase (Brucella abortus (strain 2308)).